A 258-amino-acid polypeptide reads, in one-letter code: UBX domain-containing protein 2A (258 aa).

Residues 1 to 152 form a required for interaction with CHRNA3 region; it reads MKEVDNLDSI…SATPRIVSKA (152 aa). The required for inhibition of CHRNA3 ubiquitination and translocation of CHRNA3 to the plasma membrane resulting in an increase in acetylcholine-gated nicotinic acetylcholine receptor currents stretch occupies residues 1–165; it reads MKEVDNLDSI…EVDNKSTLSA (165 aa). One can recognise an SEP domain in the interval 61-125; it reads QVDVNIKLWK…VEDKKNEVCM (65 aa). The interval 168–258 is required for interaction with VCP; that stretch reads LNNLEPITRI…QKTAEPFRKL (91 aa). The region spanning 170 to 247 is the UBX domain; the sequence is NLEPITRIQI…DLQNAVIIQR (78 aa).

As to quaternary structure, part of a complex composed of STUB1/CHIP, VCP/p97, CHRNA3, and UBXN2A that modulates the ubiquitination and endoplasmic reticulum-associated degradation (ERAD) of CHRNA3. Within the complex UBXN2A acts as a scaffold protein required for the interaction of CHRNA3 with VCP/p97, this interaction also inhibits CHRNA3 ubiquitination by STUB1/CHIP and subsequently ERAD. Interacts (via SEP domain) with CHRNA3 and interacts (via UBX domain) with VCP/P97; these interactions are required for the interaction of CHRNA3 with the STUB1-VCP-UBXN2A complex. Interacts with HSPA9/MOT-2 (via SBD domain); the interaction inhibits HSPA9/MOT-2 interaction with and degradation of p53, thereby promotes p53 translocation to the nucleus. Interacts with RICTOR. Ubiquitinated.

The protein resides in the golgi apparatus. Its subcellular location is the endoplasmic reticulum. It localises to the perikaryon. The protein localises to the cell projection. It is found in the dendrite. The protein resides in the nucleus. Its subcellular location is the cytoplasm. Acts to repress the ubiquitination and subsequent endoplasmic reticulum-associated degradation of CHRNA3 by the STUB1-VCP-UBXN2A complex in cortical neurons. Also acts to promote the translocation of CHRNA3 to the plasma membrane and subsequently increases plasma membrane acetylcholine-gated ion-channel activation. Plays a role in the inhibition of STUB1-mediated TP53 degradation, via its interaction with HSPA9 which acts to inhibit TP53 binding to HSPA9. Positively mediates the ubiquitination and proteosomal degradation of RICTOR, may thereby act as a negative regulator of the mTORC2 pathway. The sequence is that of UBX domain-containing protein 2A from Rattus norvegicus (Rat).